The chain runs to 154 residues: Nucleoside diphosphate kinase A2 (154 aa).

The ATP site is built by Lys13, Phe61, Arg89, Thr95, Arg106, and Asn116. His119 (pros-phosphohistidine intermediate) is an active-site residue.

This sequence belongs to the NDK family. It depends on Mg(2+) as a cofactor.

The protein localises to the cytoplasm. The enzyme catalyses a 2'-deoxyribonucleoside 5'-diphosphate + ATP = a 2'-deoxyribonucleoside 5'-triphosphate + ADP. The catalysed reaction is a ribonucleoside 5'-diphosphate + ATP = a ribonucleoside 5'-triphosphate + ADP. Functionally, major role in the synthesis of nucleoside triphosphates other than ATP. The ATP gamma phosphate is transferred to the NDP beta phosphate via a ping-pong mechanism, using a phosphorylated active-site intermediate. In Xenopus laevis (African clawed frog), this protein is Nucleoside diphosphate kinase A2.